The sequence spans 258 residues: MDELVIAGRSFSSRLMVGTGKFASNSLMADALAASGSQIVTVALRRVDIDRPEDDLLAHIDRDKYLLLPNTSGARDADEAVRLARLARAAGCEPWVKLEVTPDPYYLLPDPIETLKAAEILVKEGFVVLPYINADPVLAKHLQEAGTATVMPLGAPIGTNKGVRTRDNIAIIIEQAIVPVVVDAGLGAPSHVAEAMEMGADAVLVNTALAVTPDPAGMANAFRLGVEAGRRAFLAGLPAQQQKAEASSPLTGFLRDEQ.

Catalysis depends on Lys-97, which acts as the Schiff-base intermediate with DXP. 1-deoxy-D-xylulose 5-phosphate contacts are provided by residues Gly-158, 184–185 (AG), and 206–207 (NT).

The protein belongs to the ThiG family. Homotetramer. Forms heterodimers with either ThiH or ThiS.

It is found in the cytoplasm. The catalysed reaction is [ThiS sulfur-carrier protein]-C-terminal-Gly-aminoethanethioate + 2-iminoacetate + 1-deoxy-D-xylulose 5-phosphate = [ThiS sulfur-carrier protein]-C-terminal Gly-Gly + 2-[(2R,5Z)-2-carboxy-4-methylthiazol-5(2H)-ylidene]ethyl phosphate + 2 H2O + H(+). It functions in the pathway cofactor biosynthesis; thiamine diphosphate biosynthesis. In terms of biological role, catalyzes the rearrangement of 1-deoxy-D-xylulose 5-phosphate (DXP) to produce the thiazole phosphate moiety of thiamine. Sulfur is provided by the thiocarboxylate moiety of the carrier protein ThiS. In vitro, sulfur can be provided by H(2)S. The chain is Thiazole synthase 1 from Syntrophotalea carbinolica (strain DSM 2380 / NBRC 103641 / GraBd1) (Pelobacter carbinolicus).